A 147-amino-acid polypeptide reads, in one-letter code: Hemoglobin subunit beta (147 aa).

Residue V2 is modified to N-acetylvaline. The region spanning 3-147 (HLSAEEKGHI…VATALAHKYH (145 aa)) is the Globin domain. K60 bears the N6-acetyllysine mark. A heme b-binding site is contributed by H64. Residue K83 is modified to N6-acetyllysine. A heme b-binding site is contributed by H93. C94 is modified (S-nitrosocysteine). An N6-acetyllysine modification is found at K145.

This sequence belongs to the globin family. As to quaternary structure, heterotetramer of two alpha chains and two beta chains. As to expression, red blood cells.

Its function is as follows. Involved in oxygen transport from the lung to the various peripheral tissues. This chain is Hemoglobin subunit beta (HBB), found in Sminthopsis crassicaudata (Fat-tailed dunnart).